Here is a 450-residue protein sequence, read N- to C-terminus: 23S rRNA (uracil(1939)-C(5))-methyltransferase RlmD (450 aa).

The 59-residue stretch at 12–70 (SKQLSAKLSLSVNQLDHLGAGIAQHQGKVVFIPGALPDETVTVQLTEQKKNYARAKLIK) folds into the TRAM domain. [4Fe-4S] cluster is bound by residues C83, C89, C92, and C171. Residues Q283, F312, N317, E333, D360, and D380 each contribute to the S-adenosyl-L-methionine site. C406 functions as the Nucleophile in the catalytic mechanism.

The protein belongs to the class I-like SAM-binding methyltransferase superfamily. RNA M5U methyltransferase family. RlmD subfamily.

The enzyme catalyses uridine(1939) in 23S rRNA + S-adenosyl-L-methionine = 5-methyluridine(1939) in 23S rRNA + S-adenosyl-L-homocysteine + H(+). Catalyzes the formation of 5-methyl-uridine at position 1939 (m5U1939) in 23S rRNA. This chain is 23S rRNA (uracil(1939)-C(5))-methyltransferase RlmD, found in Shewanella baltica (strain OS195).